A 539-amino-acid chain; its full sequence is Phosphoenolpyruvate carboxykinase (ATP) (539 aa).

Residues arginine 64, tyrosine 206, and lysine 212 each contribute to the substrate site. Residues lysine 212, histidine 231, and 247 to 255 (GLSGTGKTT) contribute to the ATP site. Mn(2+) contacts are provided by lysine 212 and histidine 231. Aspartate 268 is a Mn(2+) binding site. Residues glutamate 296, arginine 332, 448-449 (RI), and threonine 454 contribute to the ATP site. Residue arginine 332 coordinates substrate.

The protein belongs to the phosphoenolpyruvate carboxykinase (ATP) family. Monomer. It depends on Mn(2+) as a cofactor.

It is found in the cytoplasm. It catalyses the reaction oxaloacetate + ATP = phosphoenolpyruvate + ADP + CO2. Its pathway is carbohydrate biosynthesis; gluconeogenesis. Its function is as follows. Involved in the gluconeogenesis. Catalyzes the conversion of oxaloacetate (OAA) to phosphoenolpyruvate (PEP) through direct phosphoryl transfer between the nucleoside triphosphate and OAA. In Erwinia tasmaniensis (strain DSM 17950 / CFBP 7177 / CIP 109463 / NCPPB 4357 / Et1/99), this protein is Phosphoenolpyruvate carboxykinase (ATP).